The chain runs to 1058 residues: Carbamoyl phosphate synthase large chain (1058 aa).

The segment at 1 to 401 is carboxyphosphate synthetic domain; that stretch reads MPKRKDIQKI…SLLKACRSLE (401 aa). ATP is bound by residues Arg129, Arg169, Gly175, Gly176, Arg208, Ile210, Glu215, Gly241, Ile242, His243, Gln284, and Glu298. The ATP-grasp 1 domain maps to 133 to 327; that stretch reads KQLMQELDQP…IAKLAAKIAV (195 aa). The Mg(2+) site is built by Gln284, Glu298, and Asn300. Positions 284, 298, and 300 each coordinate Mn(2+). Residues 402–546 are oligomerization domain; the sequence is IGVCHNEMTS…YSTYELENES (145 aa). Residues 547 to 929 are carbamoyl phosphate synthetic domain; sequence VQSNKESILV…ALYKAFEANN (383 aa). One can recognise an ATP-grasp 2 domain in the interval 671–861; that stretch reads EKALKELGIP…MAQIATKLIL (191 aa). ATP is bound by residues Arg707, Ser746, Ile748, Glu752, Gly777, Val778, His779, Ser780, Gln820, and Glu832. Gln820, Glu832, and Asn834 together coordinate Mg(2+). Mn(2+)-binding residues include Gln820, Glu832, and Asn834. An MGS-like domain is found at 930 to 1058; sequence SHLSEFGQIV…ESRCFNIEAI (129 aa). Positions 930 to 1058 are allosteric domain; that stretch reads SHLSEFGQIV…ESRCFNIEAI (129 aa).

The protein belongs to the CarB family. In terms of assembly, composed of two chains; the small (or glutamine) chain promotes the hydrolysis of glutamine to ammonia, which is used by the large (or ammonia) chain to synthesize carbamoyl phosphate. Tetramer of heterodimers (alpha,beta)4. The cofactor is Mg(2+). Mn(2+) serves as cofactor.

It carries out the reaction hydrogencarbonate + L-glutamine + 2 ATP + H2O = carbamoyl phosphate + L-glutamate + 2 ADP + phosphate + 2 H(+). The enzyme catalyses hydrogencarbonate + NH4(+) + 2 ATP = carbamoyl phosphate + 2 ADP + phosphate + 2 H(+). The protein operates within amino-acid biosynthesis; L-arginine biosynthesis; carbamoyl phosphate from bicarbonate: step 1/1. It participates in pyrimidine metabolism; UMP biosynthesis via de novo pathway; (S)-dihydroorotate from bicarbonate: step 1/3. Functionally, large subunit of the glutamine-dependent carbamoyl phosphate synthetase (CPSase). CPSase catalyzes the formation of carbamoyl phosphate from the ammonia moiety of glutamine, carbonate, and phosphate donated by ATP, constituting the first step of 2 biosynthetic pathways, one leading to arginine and/or urea and the other to pyrimidine nucleotides. The large subunit (synthetase) binds the substrates ammonia (free or transferred from glutamine from the small subunit), hydrogencarbonate and ATP and carries out an ATP-coupled ligase reaction, activating hydrogencarbonate by forming carboxy phosphate which reacts with ammonia to form carbamoyl phosphate. The chain is Carbamoyl phosphate synthase large chain from Streptococcus pyogenes serotype M1.